The chain runs to 232 residues: Thiamine import ATP-binding protein ThiQ (232 aa).

Residues 2–230 (LKLTDITWLY…KASASALLGI (229 aa)) form the ABC transporter domain. Residue 32-39 (GPSGAGKS) participates in ATP binding.

The protein belongs to the ABC transporter superfamily. Thiamine importer (TC 3.A.1.19.1) family. As to quaternary structure, the complex is composed of two ATP-binding proteins (ThiQ), two transmembrane proteins (ThiP) and a solute-binding protein (ThiB).

It localises to the cell inner membrane. It catalyses the reaction thiamine(out) + ATP + H2O = thiamine(in) + ADP + phosphate + H(+). Functionally, part of the ABC transporter complex ThiBPQ involved in thiamine import. Responsible for energy coupling to the transport system. The sequence is that of Thiamine import ATP-binding protein ThiQ from Escherichia coli O6:K15:H31 (strain 536 / UPEC).